Consider the following 145-residue polypeptide: Transcriptional regulator SlyA (145 aa).

The 134-residue stretch at 2 to 135 (ELPLGSDLAR…LALLVSRLEK (134 aa)) folds into the HTH marR-type domain. The H-T-H motif DNA-binding region spans 49-72 (QIQLAKAIGIEQPSLVRTLDQLEE).

Belongs to the SlyA family. Homodimer.

Functionally, transcription regulator that can specifically activate or repress expression of target genes. Regulates genes involved in production of antibiotic and exoenzyme virulence determinants in the phytopathogen. Required for the expression of the virulence protein evf during Drosophila melanogaster infection. This Pectobacterium carotovorum subsp. carotovorum (Erwinia carotovora subsp. carotovora) protein is Transcriptional regulator SlyA.